A 207-amino-acid polypeptide reads, in one-letter code: Outer-membrane lipoprotein LolB (207 aa).

The first 21 residues, 1–21 (MPLPDFRLIRLLPLAALVLTA), serve as a signal peptide directing secretion. Cys22 is lipidated: N-palmitoyl cysteine. A lipid anchor (S-diacylglycerol cysteine) is attached at Cys22.

This sequence belongs to the LolB family. Monomer.

The protein resides in the cell outer membrane. Plays a critical role in the incorporation of lipoproteins in the outer membrane after they are released by the LolA protein. In Escherichia coli O127:H6 (strain E2348/69 / EPEC), this protein is Outer-membrane lipoprotein LolB.